A 152-amino-acid chain; its full sequence is MFSGASAINLDAKGRIAIPKRYRESLHACHNNQLVITVDIQSSCLLLYPIHEWEQVAAKLASLSDTQPTERAIKRMLLGYAHECELDGNGRMLLPPPLRQYANLDKRAMLVGQLNKFELWDEAAWQQQIEQSRIAILNEDLAANERLADFSL.

SpoVT-AbrB domains are found at residues 5 to 52 (ASAI…PIHE) and 81 to 124 (AHEC…DEAA).

Belongs to the MraZ family. Forms oligomers.

Its subcellular location is the cytoplasm. It localises to the nucleoid. The polypeptide is Transcriptional regulator MraZ (Shewanella pealeana (strain ATCC 700345 / ANG-SQ1)).